The following is a 114-amino-acid chain: U17-barytoxin-Tl1d (114 aa).

The first 20 residues, 1-20 (MKTIIVFLSLLVLATKFGDA), serve as a signal peptide directing secretion. The propeptide occupies 21 to 74 (NEGVNQEQMKEVIQNEFREDFLNEMAPMSLLQQLEAIESTLLEKEADRNSRQKR). 3 cysteine pairs are disulfide-bonded: C75/C88, C82/C93, and C87/C108.

This sequence belongs to the neurotoxin 14 (magi-1) family. 03 (ICK-30-40) subfamily. As to expression, expressed by the venom gland.

The protein localises to the secreted. In terms of biological role, ion channel inhibitor. The chain is U17-barytoxin-Tl1d from Trittame loki (Brush-footed trapdoor spider).